A 345-amino-acid polypeptide reads, in one-letter code: NADH-ubiquinone oxidoreductase chain 2 (345 aa).

9 consecutive transmembrane segments (helical) span residues 1-21, 25-45, 60-80, 113-133, 148-168, 191-211, 239-259, 274-294, and 324-344; these read MNPI…ILAM, HWVY…PIIS, FLIQ…NAYL, FWLP…IATW, LIPT…GGLG, VIII…YMIF, IITS…PMSG, HLTP…MFYL, and SSLS…PLLI.

It belongs to the complex I subunit 2 family.

The protein resides in the mitochondrion inner membrane. It carries out the reaction a ubiquinone + NADH + 5 H(+)(in) = a ubiquinol + NAD(+) + 4 H(+)(out). Core subunit of the mitochondrial membrane respiratory chain NADH dehydrogenase (Complex I) that is believed to belong to the minimal assembly required for catalysis. Complex I functions in the transfer of electrons from NADH to the respiratory chain. The immediate electron acceptor for the enzyme is believed to be ubiquinone. This chain is NADH-ubiquinone oxidoreductase chain 2 (MT-ND2), found in Varanus baritji (Black-spotted ridge-tailed monitor).